A 327-amino-acid chain; its full sequence is GPI-linked NAD(P)(+)--arginine ADP-ribosyltransferase 1 (327 aa).

Residues 1–22 (MQMPAMMSLLLVSVGLMEALQA) form the signal peptide. Intrachain disulfides connect cysteine 53-cysteine 277 and cysteine 174-cysteine 224. An N-linked (GlcNAc...) asparagine glycan is attached at asparagine 65. The TR mART core domain maps to 73-273 (QVYADSWTLA…IYLRALGKHS (201 aa)). Residues tyrosine 121 and arginine 179 each contribute to the NAD(+) site. Residues arginine 179 and serine 202 contribute to the active site. Serine 233 contributes to the NAD(+) binding site. The active site involves glutamate 240. Residue asparagine 253 is glycosylated (N-linked (GlcNAc...) asparagine). The GPI-anchor amidated serine moiety is linked to residue serine 295. A propeptide spans 296-327 (AMGQSPLSAVWSLLLLLWFLVVRAFPDGPGLL) (removed in mature form).

It belongs to the Arg-specific ADP-ribosyltransferase family.

It localises to the sarcoplasmic reticulum membrane. The catalysed reaction is L-arginyl-[protein] + NAD(+) = N(omega)-(ADP-D-ribosyl)-L-arginyl-[protein] + nicotinamide + H(+). In terms of biological role, has ADP-ribosyltransferase activity toward GLP1R. This is GPI-linked NAD(P)(+)--arginine ADP-ribosyltransferase 1 (ART1) from Homo sapiens (Human).